Consider the following 723-residue polypeptide: Nuclear intron maturase 3, mitochondrial (723 aa).

Residues 1–26 constitute a mitochondrion transit peptide; the sequence is MVLRLRVHSFYNRGISFLVSSSLRNL. Positions 532 to 597 are intron maturase type-2; degenerate; that stretch reads VSAPEELVRK…HYTKDLRVSD (66 aa). The segment at 646–700 adopts a THAP-type zinc-finger fold; the sequence is CAASFCERSDTIMHRVHLLQNRLHINPLDEEKWVPGMGTIHSALNRKCLPLCSTH.

The protein belongs to the plant nuclear intron maturase (nMat) family.

The protein localises to the mitochondrion. Its function is as follows. Nuclear-encoded maturase required for splicing of group-II introns in mitochondria. Necessary for mitochondrial biogenesis during early developmental stages. This Arabidopsis thaliana (Mouse-ear cress) protein is Nuclear intron maturase 3, mitochondrial.